Reading from the N-terminus, the 220-residue chain is GTP cyclohydrolase 1 (220 aa).

Cys113, His116, and Cys184 together coordinate Zn(2+).

This sequence belongs to the GTP cyclohydrolase I family. In terms of assembly, homomer.

The enzyme catalyses GTP + H2O = 7,8-dihydroneopterin 3'-triphosphate + formate + H(+). It participates in cofactor biosynthesis; 7,8-dihydroneopterin triphosphate biosynthesis; 7,8-dihydroneopterin triphosphate from GTP: step 1/1. In Hamiltonella defensa subsp. Acyrthosiphon pisum (strain 5AT), this protein is GTP cyclohydrolase 1.